A 438-amino-acid polypeptide reads, in one-letter code: sn-glycerol-3-phosphate-binding periplasmic protein UgpB (438 aa).

Residues 1–23 (MKPLRYTASALALGLALMANAQA) form the signal peptide. The sn-glycerol 3-phosphate site is built by Tyr65, Glu89, Ser144, Ser270, Gly307, Tyr346, and Arg397.

The protein belongs to the bacterial solute-binding protein 1 family. The complex is composed of two ATP-binding proteins (UgpC), two transmembrane proteins (UgpA and UgpE) and a solute-binding protein (UgpB).

It localises to the periplasm. Part of the ABC transporter complex UgpBAEC involved in sn-glycerol-3-phosphate (G3P) import. Binds G3P. The chain is sn-glycerol-3-phosphate-binding periplasmic protein UgpB (ugpB) from Escherichia coli O6:K15:H31 (strain 536 / UPEC).